A 336-amino-acid chain; its full sequence is MSRVTLSRYLIEQTRSNNTPADLRFLIEVVARACKEISHAVSKGALGGVLGSMGTENVQGEVQKKLDVLSNEILLEANEWGGHLAGMASEEMDNAYQIPGKYPKGAYLLVFDPLDGSSNIDINAPVGTIFSVLRCPNEYLSQNEALDEKAFLQPGTQQVAAGYAIYGPQTMLVLTLGHGVKGFTLDREMGSFVLTHEDITIPESTQEFAINMSNQRHWEAPVQRYVSELLAGEEGPLKKNYNMRWVAAMVADVHRILTRGGLFMYPRDSREPSKPGKLRLMYEANPMSFLVEQAGGASTDGHQRILDIKPEGLHQRVAVFLGSKEEVARATAYHKE.

Mg(2+) contacts are provided by Glu90, Asp112, Leu114, and Asp115. Residues 115–118, Asn211, and Lys277 each bind substrate; that span reads DGSS. Glu283 contacts Mg(2+).

Belongs to the FBPase class 1 family. In terms of assembly, homotetramer. Mg(2+) serves as cofactor.

The protein resides in the cytoplasm. The catalysed reaction is beta-D-fructose 1,6-bisphosphate + H2O = beta-D-fructose 6-phosphate + phosphate. The protein operates within carbohydrate biosynthesis; gluconeogenesis. The protein is Fructose-1,6-bisphosphatase class 1 of Pseudomonas fluorescens (strain Pf0-1).